A 338-amino-acid polypeptide reads, in one-letter code: Nuclear hormone receptor family member nhr-52 (338 aa).

The segment at residues 1-75 is a DNA-binding region (nuclear receptor); sequence MKCLVCCSYA…IGMRFSEPKQ (75 aa). 2 NR C4-type zinc fingers span residues 3 to 23 and 39 to 63; these read CLVC…CSAC and CKYD…FKKC. An NR LBD domain is found at 98 to 337; that stretch reads KDGVHYSNFL…KKLVNDIIIR (240 aa).

It belongs to the nuclear hormone receptor family.

It is found in the nucleus. In terms of biological role, orphan nuclear receptor. The polypeptide is Nuclear hormone receptor family member nhr-52 (nhr-52) (Caenorhabditis elegans).